A 223-amino-acid chain; its full sequence is Expansin-B6 (223 aa).

The region spanning 16-124 is the Expansin-like EG45 domain; that stretch reads GGACGFAVAN…RRVECLYRRT (109 aa). 3 cysteine pairs are disulfide-bonded: Cys19/Cys46, Cys49/Cys119, and Cys54/Cys60. In terms of domain architecture, Expansin-like CBD spans 137-218; sequence YYISFVVEYE…NWKPNETYRS (82 aa). Asn213 carries N-linked (GlcNAc...) asparagine glycosylation.

The protein belongs to the expansin family. Expansin B subfamily.

The protein localises to the secreted. It is found in the cell wall. The protein resides in the membrane. Its function is as follows. May cause loosening and extension of plant cell walls by disrupting non-covalent bonding between cellulose microfibrils and matrix glucans. This Arabidopsis thaliana (Mouse-ear cress) protein is Expansin-B6.